The primary structure comprises 352 residues: Carbohydrate sulfotransferase 11 (352 aa).

At 1 to 16 the chain is on the cytoplasmic side; that stretch reads MKPALLEVMRMNRICR. The chain crosses the membrane as a helical; Signal-anchor for type II membrane protein span at residues 17-37; sequence MVLATCLGSFILVIFYFQSML. The Lumenal portion of the chain corresponds to 38 to 352; it reads HPVMRRNPFG…YSVPNYLKLD (315 aa). 3'-phosphoadenylyl sulfate-binding positions include 124 to 130 and 186 to 194; these read PKVACTN and REPFERLVS. N-linked (GlcNAc...) asparagine glycans are attached at residues asparagine 205, asparagine 223, asparagine 321, and asparagine 342.

This sequence belongs to the sulfotransferase 2 family. Post-translationally, N-glycosylated; required for activity and stability.

Its subcellular location is the golgi apparatus membrane. The enzyme catalyses chondroitin beta-D-glucuronate + n 3'-phosphoadenylyl sulfate = chondroitin 4'-sulfate + n adenosine 3',5'-bisphosphate + n H(+). Its function is as follows. Catalyzes the transfer of sulfate to position 4 of the N-acetylgalactosamine (GalNAc) residue of chondroitin. Chondroitin sulfate constitutes the predominant proteoglycan present in cartilage and is distributed on the surfaces of many cells and extracellular matrices. Can also sulfate Gal residues in desulfated dermatan sulfate. Preferentially sulfates in GlcA-&gt;GalNAc unit than in IdoA-&gt;GalNAc unit. Does not form 4, 6-di-O-sulfated GalNAc when chondroitin sulfate C is used as an acceptor. The protein is Carbohydrate sulfotransferase 11 (Chst11) of Rattus norvegicus (Rat).